The sequence spans 515 residues: 1-pyrroline-5-carboxylate dehydrogenase (515 aa).

Residues Glu-286 and Cys-320 contribute to the active site.

The protein belongs to the aldehyde dehydrogenase family. RocA subfamily.

It catalyses the reaction L-glutamate 5-semialdehyde + NAD(+) + H2O = L-glutamate + NADH + 2 H(+). It participates in amino-acid degradation; L-proline degradation into L-glutamate; L-glutamate from L-proline: step 2/2. This is 1-pyrroline-5-carboxylate dehydrogenase from Bacillus cereus (strain ATCC 10987 / NRS 248).